The chain runs to 138 residues: Translation initiation factor 2 subunit beta (138 aa).

Belongs to the eIF-2-beta/eIF-5 family. As to quaternary structure, heterotrimer composed of an alpha, a beta and a gamma chain.

EIF-2 functions in the early steps of protein synthesis by forming a ternary complex with GTP and initiator tRNA. This chain is Translation initiation factor 2 subunit beta, found in Methanococcus maripaludis (strain C5 / ATCC BAA-1333).